The chain runs to 83 residues: uncharacterized protein (83 aa).

This is an uncharacterized protein from Rickettsia prowazekii (strain Madrid E).